The primary structure comprises 343 residues: Phosphatidylglycerol--prolipoprotein diacylglyceryl transferase (343 aa).

Transmembrane regions (helical) follow at residues 22-42 (IPIR…LIIG), 54-74 (GVIY…GRLY), 97-117 (VWEG…GAWI), and 123-143 (GIPL…AQAI). R145 serves as a coordination point for a 1,2-diacyl-sn-glycero-3-phospho-(1'-sn-glycerol). Transmembrane regions (helical) follow at residues 193–213 (VVHP…VLLI) and 257–277 (VNSF…LLAP). The tract at residues 283 to 343 (PATLGGTPSS…SADNSGIVEK (61 aa)) is disordered. Positions 295–325 (GGDDTAETEATADTEDTEDTEDGVTDAPEAD) are enriched in acidic residues.

This sequence belongs to the Lgt family.

Its subcellular location is the cell membrane. The enzyme catalyses L-cysteinyl-[prolipoprotein] + a 1,2-diacyl-sn-glycero-3-phospho-(1'-sn-glycerol) = an S-1,2-diacyl-sn-glyceryl-L-cysteinyl-[prolipoprotein] + sn-glycerol 1-phosphate + H(+). Its pathway is protein modification; lipoprotein biosynthesis (diacylglyceryl transfer). Catalyzes the transfer of the diacylglyceryl group from phosphatidylglycerol to the sulfhydryl group of the N-terminal cysteine of a prolipoprotein, the first step in the formation of mature lipoproteins. This chain is Phosphatidylglycerol--prolipoprotein diacylglyceryl transferase, found in Mycobacteroides abscessus (strain ATCC 19977 / DSM 44196 / CCUG 20993 / CIP 104536 / JCM 13569 / NCTC 13031 / TMC 1543 / L948) (Mycobacterium abscessus).